Consider the following 159-residue polypeptide: MRPTPMTAILALTLAAAAPAMAASLKDVAPYPEAEKGFTRQVIHLPAQADESAYKLEILAGKTLKVDCNRQRLGGSLEERTLEGWGYNYYRLDKVSGPASTLMACPDGKKTEAFVPVVGDGFLLRYNSKLPVVVYVPKDVEVRYRVWSASQDVQKANVE.

The N-terminal stretch at 1-22 (MRPTPMTAILALTLAAAAPAMA) is a signal peptide. An intrachain disulfide couples Cys68 to Cys105.

The protein belongs to the protease inhibitor I11 (ecotin) family. In terms of assembly, homodimer.

The protein resides in the periplasm. General inhibitor of family S1 serine proteases. This chain is Ecotin, found in Pseudomonas putida (strain GB-1).